Here is a 250-residue protein sequence, read N- to C-terminus: Ribonuclease HII (250 aa).

In terms of domain architecture, RNase H type-2 spans 66–250; the sequence is QLVAGVDEVG…SFAPVSEYEK (185 aa). Asp72, Glu73, and Asp164 together coordinate a divalent metal cation.

The protein belongs to the RNase HII family. The cofactor is Mn(2+). Mg(2+) serves as cofactor.

It is found in the cytoplasm. It carries out the reaction Endonucleolytic cleavage to 5'-phosphomonoester.. Endonuclease that specifically degrades the RNA of RNA-DNA hybrids. The protein is Ribonuclease HII of Lactobacillus gasseri (strain ATCC 33323 / DSM 20243 / BCRC 14619 / CIP 102991 / JCM 1131 / KCTC 3163 / NCIMB 11718 / NCTC 13722 / AM63).